A 1406-amino-acid polypeptide reads, in one-letter code: Protein FAM135B (1406 aa).

2 disordered regions span residues 519-548 (WTGQTSDAGTYPVADVDTSRRSPGPEDGQA) and 770-820 (SVSA…GDSG). Phosphoserine occurs at positions 777 and 778. The span at 804-816 (KSQGSPGSCSQLC) shows a compositional bias: polar residues.

The protein belongs to the FAM135 family.

The chain is Protein FAM135B (FAM135B) from Homo sapiens (Human).